Reading from the N-terminus, the 258-residue chain is Imidazole glycerol phosphate synthase subunit HisF (258 aa).

Catalysis depends on residues Asp11 and Asp130.

It belongs to the HisA/HisF family. As to quaternary structure, heterodimer of HisH and HisF.

The protein localises to the cytoplasm. It carries out the reaction 5-[(5-phospho-1-deoxy-D-ribulos-1-ylimino)methylamino]-1-(5-phospho-beta-D-ribosyl)imidazole-4-carboxamide + L-glutamine = D-erythro-1-(imidazol-4-yl)glycerol 3-phosphate + 5-amino-1-(5-phospho-beta-D-ribosyl)imidazole-4-carboxamide + L-glutamate + H(+). It functions in the pathway amino-acid biosynthesis; L-histidine biosynthesis; L-histidine from 5-phospho-alpha-D-ribose 1-diphosphate: step 5/9. IGPS catalyzes the conversion of PRFAR and glutamine to IGP, AICAR and glutamate. The HisF subunit catalyzes the cyclization activity that produces IGP and AICAR from PRFAR using the ammonia provided by the HisH subunit. In Shigella boydii serotype 4 (strain Sb227), this protein is Imidazole glycerol phosphate synthase subunit HisF.